Consider the following 937-residue polypeptide: Protein translocase subunit SecA (937 aa).

ATP contacts are provided by residues Gln-90, 108–112 (GEGKT), and Asp-509.

This sequence belongs to the SecA family. As to quaternary structure, monomer and homodimer. Part of the essential Sec protein translocation apparatus which comprises SecA, SecYEG and auxiliary proteins SecDF. Other proteins may also be involved.

It is found in the cell inner membrane. The protein resides in the cellular thylakoid membrane. It localises to the cytoplasm. It carries out the reaction ATP + H2O + cellular proteinSide 1 = ADP + phosphate + cellular proteinSide 2.. In terms of biological role, part of the Sec protein translocase complex. Interacts with the SecYEG preprotein conducting channel. Has a central role in coupling the hydrolysis of ATP to the transfer of proteins into and across the cell membrane, serving as an ATP-driven molecular motor driving the stepwise translocation of polypeptide chains across the membrane. Its function is as follows. Probably participates in protein translocation into and across both the cytoplasmic and thylakoid membranes in cyanobacterial cells. The polypeptide is Protein translocase subunit SecA (Synechococcus sp. (strain CC9902)).